Reading from the N-terminus, the 373-residue chain is MTSALCSKPIAPHTLSDDLADLSYSNTMALACMADSVVTLTDEVQLDEFMAYYEQDTQHRKPLFVLSGGSNVLLPAKLNAIVLRPQMRGIQVTAQTDFHVDIEVMAGENWHDLVVHTVAQGWYGLENLALIPGLTGAAPIQNIGAYGVQLEDCLQYVRAYHLPSQTWHDLTAVDCEFGYRDSIFKRQPNTWLISRVGFRLHTDATKVLASYGDVQTVAQSYATQQGRTKPMPADVMHAIIEIRQQKLPDPKQLPNCGSFFQNPIVPQDQFATLQSSYPAIVGYPMPDAMTKVAAGWLIEQAGLKGGGIEPIFTHQQQALVLTNHAPYIATKQDVAAAQKYIIDTVYKKFAIQLSREPVWVNADGSIGYDEHVV.

One can recognise an FAD-binding PCMH-type domain in the interval 30 to 203 (LACMADSVVT…SRVGFRLHTD (174 aa)). The active site involves R180. The active-site Proton donor is the S258. E356 is a catalytic residue.

The protein belongs to the MurB family. Requires FAD as cofactor.

The protein localises to the cytoplasm. The catalysed reaction is UDP-N-acetyl-alpha-D-muramate + NADP(+) = UDP-N-acetyl-3-O-(1-carboxyvinyl)-alpha-D-glucosamine + NADPH + H(+). Its pathway is cell wall biogenesis; peptidoglycan biosynthesis. Its function is as follows. Cell wall formation. The sequence is that of UDP-N-acetylenolpyruvoylglucosamine reductase from Psychrobacter cryohalolentis (strain ATCC BAA-1226 / DSM 17306 / VKM B-2378 / K5).